The primary structure comprises 406 residues: Phosphatidylinositol 5-phosphate 4-kinase type-2 alpha (406 aa).

Ala-2 carries the N-acetylalanine modification. Thr-3 is subject to Phosphothreonine. Phosphoserine is present on Ser-14. Residues 33-405 (ASDPLLSVLM…RFLDFIGHIL (373 aa)) enclose the PIPK domain. The interval 59–65 (VMLMPDD) is required for interaction with PIP5K1A. 2 positions are modified to N6-acetyllysine: Lys-89 and Lys-145. The tract at residues 288–329 (QEEVECEENDGEEEGESDGTHPVGTPPDSPGNTLNSSPPLAP) is disordered. A compositionally biased stretch (acidic residues) spans 289 to 304 (EEVECEENDGEEEGES).

Homodimer. Interacts with PIP4K2B; the interaction may regulate localization to the nucleus. Probably interacts with PIP5K1A; the interaction inhibits PIP5K1A kinase activity. Post-translationally, phosphorylated in tyrosines. Phosphorylation is induced by light and increases kinase activity. Expressed ubiquitously, with high levels in the brain. Present in most tissues, except notably skeletal muscle and small intestine.

The protein localises to the cell membrane. It is found in the nucleus. Its subcellular location is the lysosome. The protein resides in the cytoplasm. It localises to the photoreceptor inner segment. The protein localises to the cell projection. It is found in the cilium. Its subcellular location is the photoreceptor outer segment. It catalyses the reaction a 1,2-diacyl-sn-glycero-3-phospho-(1D-myo-inositol-5-phosphate) + ATP = a 1,2-diacyl-sn-glycero-3-phospho-(1D-myo-inositol-4,5-bisphosphate) + ADP + H(+). The catalysed reaction is 1,2-dihexadecanoyl-sn-glycero-3-phospho-(1D-myo-inositol-5-phosphate) + ATP = 1,2-dihexadecanoyl-sn-glycero-3-phospho-(1D-myo-inositol-4,5-bisphosphate) + ADP + H(+). The enzyme catalyses 1,2-dihexadecanoyl-sn-glycero-3-phospho-(1D-myo-inositol-5-phosphate) + GTP = 1,2-dihexadecanoyl-sn-glycero-3-phospho-(1D-myo-inositol-4,5-bisphosphate) + GDP + H(+). In rod outer segments, activated by light. Inhibited by I-OMe tyrphostin AG-538 (I-OMe-AG-538), acting as an ATP-competitive inhibitor. Catalyzes the phosphorylation of phosphatidylinositol 5-phosphate (PtdIns5P) on the fourth hydroxyl of the myo-inositol ring, to form phosphatidylinositol 4,5-bisphosphate (PtdIns(4,5)P2). Has both ATP- and GTP-dependent kinase activities. May exert its function by regulating the levels of PtdIns5P, which functions in the cytosol by increasing AKT activity and in the nucleus signals through ING2. May regulate the pool of cytosolic PtdIns5P in response to the activation of tyrosine phosphorylation. Required for lysosome-peroxisome membrane contacts and intracellular cholesterol transport through modulating peroxisomal PtdIns(4,5)P2 level. In collaboration with PIP4K2B, has a role in mediating autophagy in times of nutrient stress. Required for autophagosome-lysosome fusion and the regulation of cellular lipid metabolism. May be involved in thrombopoiesis, and the terminal maturation of megakaryocytes and regulation of their size. Negatively regulates insulin signaling through a catalytic-independent mechanism. PIP4Ks interact with PIP5Ks and suppress PIP5K-mediated PtdIns(4,5)P2 synthesis and insulin-dependent conversion to PtdIns(3,4,5)P3. This is Phosphatidylinositol 5-phosphate 4-kinase type-2 alpha from Homo sapiens (Human).